A 205-amino-acid polypeptide reads, in one-letter code: Small ribosomal subunit protein uS4 (205 aa).

Residues 20–47 (WGRSKSPLNRGKENPPGQHGQRRKKPSD) form a disordered region. The S4 RNA-binding domain occupies 94–154 (CRLDAVVYRL…TKSKDMALIL (61 aa)).

This sequence belongs to the universal ribosomal protein uS4 family. In terms of assembly, part of the 30S ribosomal subunit. Contacts protein S5. The interaction surface between S4 and S5 is involved in control of translational fidelity.

In terms of biological role, one of the primary rRNA binding proteins, it binds directly to 16S rRNA where it nucleates assembly of the body of the 30S subunit. Its function is as follows. With S5 and S12 plays an important role in translational accuracy. The protein is Small ribosomal subunit protein uS4 of Paramagnetospirillum magneticum (strain ATCC 700264 / AMB-1) (Magnetospirillum magneticum).